We begin with the raw amino-acid sequence, 111 residues long: Cytochrome c oxidase subunit 6A1, mitochondrial (111 aa).

The N-terminal 26 residues, 1 to 26 (MASAVLSASRVSGLLGRALPRVGRPM), are a transit peptide targeting the mitochondrion. Residues 27–36 (SSGAHGEEGS) lie on the Mitochondrial matrix side of the membrane. Residues 37–61 (ARIWKALTYFVALPGVGVSMLNVFL) form a helical membrane-spanning segment. Residues 62-111 (KSRHEEHERPEFVAYPHLRIRTKPFPWGDGNHTLFHNPHMNPLPTGYEDE) lie on the Mitochondrial intermembrane side of the membrane.

This sequence belongs to the cytochrome c oxidase subunit 6A family. Component of the cytochrome c oxidase (complex IV, CIV), a multisubunit enzyme composed of 14 subunits. The complex is composed of a catalytic core of 3 subunits MT-CO1, MT-CO2 and MT-CO3, encoded in the mitochondrial DNA, and 11 supernumerary subunits COX4I, COX5A, COX5B, COX6A, COX6B, COX6C, COX7A, COX7B, COX7C, COX8 and NDUFA4, which are encoded in the nuclear genome. The complex exists as a monomer or a dimer and forms supercomplexes (SCs) in the inner mitochondrial membrane with NADH-ubiquinone oxidoreductase (complex I, CI) and ubiquinol-cytochrome c oxidoreductase (cytochrome b-c1 complex, complex III, CIII), resulting in different assemblies (supercomplex SCI(1)III(2)IV(1) and megacomplex MCI(2)III(2)IV(2)).

Its subcellular location is the mitochondrion inner membrane. It participates in energy metabolism; oxidative phosphorylation. Functionally, component of the cytochrome c oxidase, the last enzyme in the mitochondrial electron transport chain which drives oxidative phosphorylation. The respiratory chain contains 3 multisubunit complexes succinate dehydrogenase (complex II, CII), ubiquinol-cytochrome c oxidoreductase (cytochrome b-c1 complex, complex III, CIII) and cytochrome c oxidase (complex IV, CIV), that cooperate to transfer electrons derived from NADH and succinate to molecular oxygen, creating an electrochemical gradient over the inner membrane that drives transmembrane transport and the ATP synthase. Cytochrome c oxidase is the component of the respiratory chain that catalyzes the reduction of oxygen to water. Electrons originating from reduced cytochrome c in the intermembrane space (IMS) are transferred via the dinuclear copper A center (CU(A)) of subunit 2 and heme A of subunit 1 to the active site in subunit 1, a binuclear center (BNC) formed by heme A3 and copper B (CU(B)). The BNC reduces molecular oxygen to 2 water molecules unsing 4 electrons from cytochrome c in the IMS and 4 protons from the mitochondrial matrix. This chain is Cytochrome c oxidase subunit 6A1, mitochondrial (Cox6a1), found in Rattus norvegicus (Rat).